We begin with the raw amino-acid sequence, 451 residues long: MSEKKIEELLKLLSMNNGDMSKLTANQRKEMKEYKFWKTQPVTKFDEEVKEEGPIHEEKTPADIPDEPLPLLPDFEWCAIDVDDEKQLEDVFVLLNENYVEDRDASFRFNYTREFFNWALKSPGWTPDWHIGVRVKASKKLIAFISAIPVRLRVRAKVIDSVEINFLCVHKQLRSKRLTPVLIKEITRRVNKRNIWHALYTAGVVLPAPVSTCRYAHRPLNWDKLYEVQFTDLPPNATKAEMVAKYTLPKATKTAGLRELRLEDVDQALALFNRYQSRFDIVQEFTKEEFIHWFINDKNVVEQDKRVVFSYVVESEGKVTDFFSFYSLPFTILNNSRYKDLGIGYLYYYASDADFKFEDRFDKEGTSLLKQRLSTLVQDACIIAAQNKMDVFNALSSQDNTLFLEDLKFGPGDGFLNFYLFNYRTFPITGGLTEDQHFDTEHRSNVGVVML.

Tetradecanoyl-CoA-binding positions include 34 to 37, 167 to 169, and 175 to 179; these read YKFW, LCV, and SKRLT. L451 acts as the Proton acceptor; via carboxylate in catalysis.

Belongs to the NMT family. As to quaternary structure, monomer.

Its subcellular location is the cytoplasm. It carries out the reaction N-terminal glycyl-[protein] + tetradecanoyl-CoA = N-tetradecanoylglycyl-[protein] + CoA + H(+). Its function is as follows. Adds a myristoyl group to the N-terminal glycine residue of certain cellular proteins. In Candida glabrata (strain ATCC 2001 / BCRC 20586 / JCM 3761 / NBRC 0622 / NRRL Y-65 / CBS 138) (Yeast), this protein is Glycylpeptide N-tetradecanoyltransferase (NMT1).